We begin with the raw amino-acid sequence, 126 residues long: Fluoride-specific ion channel FluC (126 aa).

4 helical membrane passes run 5–25, 35–55, 68–88, and 99–119; these read VLAVSVGAVIGANLRWGLGLW, WGTLVANLSGGWLIGVLMAFF, FAVTGLCGALTTFSTFSLEMF, and ALVGILAHVVGSILMTALGFL. Positions 75 and 78 each coordinate Na(+).

Belongs to the fluoride channel Fluc/FEX (TC 1.A.43) family.

Its subcellular location is the cell inner membrane. It carries out the reaction fluoride(in) = fluoride(out). Na(+) is not transported, but it plays an essential structural role and its presence is essential for fluoride channel function. Functionally, fluoride-specific ion channel. Important for reducing fluoride concentration in the cell, thus reducing its toxicity. This is Fluoride-specific ion channel FluC from Marinobacter nauticus (strain ATCC 700491 / DSM 11845 / VT8) (Marinobacter aquaeolei).